Consider the following 139-residue polypeptide: uncharacterized protein (139 aa).

This is an uncharacterized protein from Dryophytes versicolor (chameleon treefrog).